Here is a 101-residue protein sequence, read N- to C-terminus: MAKGQSLQDPFLNALRRERVPVSIYLVNGIKLQGQVESFDQFVILLKNTVSQMVYKHAISTVVPSRPVSHHSNTPSGSTNNYHGSNPSAPQQPQQDSDDAE.

The 60-residue stretch at 9–68 (DPFLNALRRERVPVSIYLVNGIKLQGQVESFDQFVILLKNTVSQMVYKHAISTVVPSRPV) folds into the Sm domain. Residues 63–101 (VPSRPVSHHSNTPSGSTNNYHGSNPSAPQQPQQDSDDAE) are disordered. Polar residues predominate over residues 70-86 (HHSNTPSGSTNNYHGSN).

Belongs to the Hfq family. As to quaternary structure, homohexamer.

Its function is as follows. RNA chaperone that binds small regulatory RNA (sRNAs) and mRNAs to facilitate mRNA translational regulation in response to envelope stress, environmental stress and changes in metabolite concentrations. Also binds with high specificity to tRNAs. The protein is RNA-binding protein Hfq of Yersinia pseudotuberculosis serotype O:1b (strain IP 31758).